A 273-amino-acid chain; its full sequence is Anthranilate synthase beta subunit 2, chloroplastic (273 aa).

A chloroplast-targeting transit peptide spans 1 to 36 (MAATTLYNSCLLQPKYGFTTRRLNQSLVNSLTNPTR). The Glutamine amidotransferase type-1 domain occupies 71–270 (PIIVIDNYDS…IKLVEKKESE (200 aa)). The active-site Nucleophile is C149. Active-site residues include H244 and E246.

Heterotetramer consisting of two non-identical subunits: a beta subunit and a large alpha subunit.

Its subcellular location is the plastid. The protein resides in the chloroplast. It catalyses the reaction chorismate + L-glutamine = anthranilate + pyruvate + L-glutamate + H(+). Its pathway is amino-acid biosynthesis; L-tryptophan biosynthesis; L-tryptophan from chorismate: step 1/5. With respect to regulation, feedback inhibition by tryptophan. Part of a heterotetrameric complex that catalyzes the two-step biosynthesis of anthranilate, an intermediate in the biosynthesis of L-tryptophan. In the first step, the glutamine-binding beta subunit of anthranilate synthase (AS) provides the glutamine amidotransferase activity which generates ammonia as a substrate that, along with chorismate, is used in the second step, catalyzed by the large alpha subunit of AS to produce anthranilate. This is Anthranilate synthase beta subunit 2, chloroplastic (ASB2) from Arabidopsis thaliana (Mouse-ear cress).